The sequence spans 752 residues: Glutamate carboxypeptidase 2 (752 aa).

The Cytoplasmic portion of the chain corresponds to 1–22 (MWNALQDRDSAEVLGHRQRWLR). S10 is subject to Phosphoserine. A helical; Signal-anchor for type II membrane protein membrane pass occupies residues 23–44 (VGTLVLALTGTFLIGFLFGWFI). Residues 45–752 (KPSNEATGNV…AAAETLREVA (708 aa)) lie on the Extracellular side of the membrane. N-linked (GlcNAc...) asparagine glycosylation is found at N78, N123, and N155. The substrate site is built by R212 and N259. Residues T271 and Y274 each coordinate Ca(2+). The NAALADase stretch occupies residues 276–589 (ANEHAYRHEL…QVRGAMVFEL (314 aa)). N338 carries N-linked (GlcNAc...) asparagine glycosylation. The Zn(2+) site is built by H379 and D389. E426 is a binding site for substrate. Residue E426 is the Nucleophile; for NAALADase activity of the active site. E427 lines the Zn(2+) pocket. Positions 435 and 438 each coordinate Ca(2+). D455 contributes to the Zn(2+) binding site. 2 N-linked (GlcNAc...) asparagine glycosylation sites follow: N461 and N478. Substrate contacts are provided by residues 519–520 (SG), N521, 536–538 (RAR), Y554, and 554–555 (YH). Residue H555 participates in Zn(2+) binding. N615 carries N-linked (GlcNAc...) asparagine glycosylation. S630 functions as the Charge relay system in the catalytic mechanism. A glycan (N-linked (GlcNAc...) asparagine) is linked at N640. Residues D668 and H691 each act as charge relay system in the active site. 701–702 (KY) lines the substrate pocket. N-linked (GlcNAc...) asparagine glycosylation is present at N722.

This sequence belongs to the peptidase M28 family. M28B subfamily. Homodimer. Requires Zn(2+) as cofactor. As to expression, expressed predominantly in the hippocampal region of the brain and in kidney. Lower levels in the ovary, testis and mandibular gland.

The protein resides in the cell membrane. It carries out the reaction Release of an unsubstituted, C-terminal glutamyl residue, typically from Ac-Asp-Glu or folylpoly-gamma-glutamates.. The NAALADase and folate hydrolase activities are inhibited by quisqualic acid. Has both folate hydrolase and N-acetylated-alpha-linked-acidic dipeptidase (NAALADase) activity. Has a preference for tri-alpha-glutamate peptides. In the intestine, required for the uptake of folate. In the brain, modulates excitatory neurotransmission through the hydrolysis of the neuropeptide, N-aceylaspartylglutamate (NAAG), thereby releasing glutamate. Functionally, also exhibits a dipeptidyl-peptidase IV type activity. In vitro, cleaves Gly-Pro-AMC. The protein is Glutamate carboxypeptidase 2 (Folh1) of Mus musculus (Mouse).